We begin with the raw amino-acid sequence, 392 residues long: Magnesium-chelatase 38 kDa subunit (392 aa).

Positions 1 to 17 are enriched in low complexity; the sequence is MTQTANAAKKTTSTKAS. Positions 1 to 21 are disordered; it reads MTQTANAAKKTTSTKASAAKE. Residue 80-87 coordinates ATP; the sequence is GHRGTGKS.

This sequence belongs to the Mg-chelatase subunits D/I family.

The catalysed reaction is protoporphyrin IX + Mg(2+) + ATP + H2O = Mg-protoporphyrin IX + ADP + phosphate + 3 H(+). The protein operates within porphyrin-containing compound metabolism; bacteriochlorophyll biosynthesis. In terms of biological role, involved in bacteriochlorophyll biosynthesis; introduces a magnesium ion into protoporphyrin IX to yield Mg-protoporphyrin IX. This is Magnesium-chelatase 38 kDa subunit (bchI) from Chlorobaculum tepidum (strain ATCC 49652 / DSM 12025 / NBRC 103806 / TLS) (Chlorobium tepidum).